Reading from the N-terminus, the 317-residue chain is Glutathione synthetase (317 aa).

Positions 126–311 (KFFATQFTQC…IGDKLMDAIA (186 aa)) constitute an ATP-grasp domain. Residue 152–208 (AAEHRDIILKPLDGMGGSSIFRHREGDPNLSVILETLTQHGSQQIMAQRYLPEIKDG) coordinates ATP. E282 and N284 together coordinate Mg(2+).

Belongs to the prokaryotic GSH synthase family. Mg(2+) serves as cofactor. Requires Mn(2+) as cofactor.

The catalysed reaction is gamma-L-glutamyl-L-cysteine + glycine + ATP = glutathione + ADP + phosphate + H(+). Its pathway is sulfur metabolism; glutathione biosynthesis; glutathione from L-cysteine and L-glutamate: step 2/2. The protein is Glutathione synthetase of Pseudomonas aeruginosa (strain ATCC 15692 / DSM 22644 / CIP 104116 / JCM 14847 / LMG 12228 / 1C / PRS 101 / PAO1).